The sequence spans 440 residues: ATP-dependent protease ATPase subunit HslU (440 aa).

ATP is bound by residues valine 18, 60–65 (GVGKTE), aspartate 253, glutamate 318, and arginine 390.

Belongs to the ClpX chaperone family. HslU subfamily. A double ring-shaped homohexamer of HslV is capped on each side by a ring-shaped HslU homohexamer. The assembly of the HslU/HslV complex is dependent on binding of ATP.

It localises to the cytoplasm. In terms of biological role, ATPase subunit of a proteasome-like degradation complex; this subunit has chaperone activity. The binding of ATP and its subsequent hydrolysis by HslU are essential for unfolding of protein substrates subsequently hydrolyzed by HslV. HslU recognizes the N-terminal part of its protein substrates and unfolds these before they are guided to HslV for hydrolysis. In Methylococcus capsulatus (strain ATCC 33009 / NCIMB 11132 / Bath), this protein is ATP-dependent protease ATPase subunit HslU.